The following is a 187-amino-acid chain: Adenine phosphoribosyltransferase (187 aa).

Belongs to the purine/pyrimidine phosphoribosyltransferase family. Homodimer.

Its subcellular location is the cytoplasm. The enzyme catalyses AMP + diphosphate = 5-phospho-alpha-D-ribose 1-diphosphate + adenine. It participates in purine metabolism; AMP biosynthesis via salvage pathway; AMP from adenine: step 1/1. Its function is as follows. Catalyzes a salvage reaction resulting in the formation of AMP, that is energically less costly than de novo synthesis. The chain is Adenine phosphoribosyltransferase from Yersinia pestis (strain Pestoides F).